The sequence spans 233 residues: Orotidine 5'-phosphate decarboxylase (233 aa).

Substrate is bound by residues D9, K31, 58 to 67, T120, R182, Q191, G211, and R212; that span reads DLKLHDIPNT. K60 functions as the Proton donor in the catalytic mechanism.

This sequence belongs to the OMP decarboxylase family. Type 1 subfamily. As to quaternary structure, homodimer.

It carries out the reaction orotidine 5'-phosphate + H(+) = UMP + CO2. It participates in pyrimidine metabolism; UMP biosynthesis via de novo pathway; UMP from orotate: step 2/2. In terms of biological role, catalyzes the decarboxylation of orotidine 5'-monophosphate (OMP) to uridine 5'-monophosphate (UMP). The polypeptide is Orotidine 5'-phosphate decarboxylase (Listeria innocua serovar 6a (strain ATCC BAA-680 / CLIP 11262)).